An 802-amino-acid chain; its full sequence is Protein SBE22 (802 aa).

Disordered stretches follow at residues 207–230 (SSTINANNMKSTGTLPPFRPRSNS) and 323–345 (SGDPKHVRSHQSKPQPRFPQRHN).

This sequence belongs to the SBE2 family.

The protein localises to the cytoplasm. It localises to the golgi apparatus. With SBE2, is involved in cell wall integrity and polarity processes like bud growth. This Vanderwaltozyma polyspora (strain ATCC 22028 / DSM 70294 / BCRC 21397 / CBS 2163 / NBRC 10782 / NRRL Y-8283 / UCD 57-17) (Kluyveromyces polysporus) protein is Protein SBE22 (SBE22).